Here is a 736-residue protein sequence, read N- to C-terminus: RNA-binding protein RMD9-like, mitochondrial (736 aa).

Disordered regions lie at residues 1–28, 124–148, and 566–618; these read MFRFAQPANVLKGKAPSQIVPPHPKTNS, PRRSNMRNNGNNNMNNGRRTEHPNT, and NRGI…GTPV. The transit peptide at 1 to 79 directs the protein to the mitochondrion; that stretch reads MFRFAQPANV…HFKNQFSSRN (79 aa). Positions 125–140 are enriched in low complexity; the sequence is RRSNMRNNGNNNMNNG. The segment covering 566 to 578 has biased composition (polar residues); that stretch reads NRGISSSSPMSAV. Low complexity predominate over residues 579 to 596; it reads NSLAPSTTNTPSPSLSPI. Residues 602 to 613 are compositionally biased toward polar residues; it reads LSSARNTPNKIW.

The protein belongs to the RMD9 family. In terms of assembly, monomer. Post-translationally, phosphorylated. Phosphorylation promotes binding to RNA.

The protein localises to the mitochondrion inner membrane. Functionally, may be involved in the processing or stability of mitochondrial mRNAs. The protein is RNA-binding protein RMD9-like, mitochondrial of Candida glabrata (strain ATCC 2001 / BCRC 20586 / JCM 3761 / NBRC 0622 / NRRL Y-65 / CBS 138) (Yeast).